The sequence spans 321 residues: tRNA(Ile)-lysidine synthase (321 aa).

21-26 (SYGSDS) lines the ATP pocket.

The protein belongs to the tRNA(Ile)-lysidine synthase family.

Its subcellular location is the cytoplasm. It carries out the reaction cytidine(34) in tRNA(Ile2) + L-lysine + ATP = lysidine(34) in tRNA(Ile2) + AMP + diphosphate + H(+). Ligates lysine onto the cytidine present at position 34 of the AUA codon-specific tRNA(Ile) that contains the anticodon CAU, in an ATP-dependent manner. Cytidine is converted to lysidine, thus changing the amino acid specificity of the tRNA from methionine to isoleucine. This is tRNA(Ile)-lysidine synthase from Campylobacter jejuni subsp. jejuni serotype O:2 (strain ATCC 700819 / NCTC 11168).